The following is a 284-amino-acid chain: Hemin import ATP-binding protein HmuV (284 aa).

One can recognise an ABC transporter domain in the interval 33–266; the sequence is LGARHLSKSY…KLLSDVYSYE (234 aa). An ATP-binding site is contributed by 65–72; sequence GPNGAGKS.

This sequence belongs to the ABC transporter superfamily. Heme (hemin) importer (TC 3.A.1.14.5) family. As to quaternary structure, the complex is composed of two ATP-binding proteins (HmuV), two transmembrane proteins (HmuU) and a solute-binding protein (HmuT).

The protein localises to the cell membrane. Part of the ABC transporter complex HmuTUV involved in hemin import. Responsible for energy coupling to the transport system. The chain is Hemin import ATP-binding protein HmuV from Thermobifida fusca (strain YX).